The following is a 287-amino-acid chain: ATP synthase gamma chain (287 aa).

This sequence belongs to the ATPase gamma chain family. F-type ATPases have 2 components, CF(1) - the catalytic core - and CF(0) - the membrane proton channel. CF(1) has five subunits: alpha(3), beta(3), gamma(1), delta(1), epsilon(1). CF(0) has three main subunits: a, b and c.

Its subcellular location is the cell inner membrane. Functionally, produces ATP from ADP in the presence of a proton gradient across the membrane. The gamma chain is believed to be important in regulating ATPase activity and the flow of protons through the CF(0) complex. The protein is ATP synthase gamma chain of Escherichia fergusonii (strain ATCC 35469 / DSM 13698 / CCUG 18766 / IAM 14443 / JCM 21226 / LMG 7866 / NBRC 102419 / NCTC 12128 / CDC 0568-73).